We begin with the raw amino-acid sequence, 984 residues long: Translation initiation factor IF-2 (984 aa).

The interval 32–402 (PAKNATSTLT…TQPQRAAKRK (371 aa)) is disordered. The segment covering 89 to 123 (PAETEAQASPAQPEAKAAAPAAEAEEAPAAKPAPA) has biased composition (low complexity). Over residues 126–136 (RKAEARTEAPR) the composition is skewed to basic and acidic residues. 2 stretches are compositionally biased toward low complexity: residues 154 to 172 (APET…SAAP) and 187 to 197 (AETTESAPAEP). The span at 198 to 220 (AAEKAPAEKRRYEVSMEPEKDSV) shows a compositional bias: basic and acidic residues. Low complexity predominate over residues 255–270 (RPDPAAVQAQAAAAAQ). Basic and acidic residues predominate over residues 271–283 (AREERAERPDRGP). A compositionally biased stretch (low complexity) spans 308-334 (GRPAPRSGAPRPGGARPAAGFGQPAQA). In terms of domain architecture, tr-type G spans 482 to 651 (PRPPVVTIMG…ALQAEVLELK (170 aa)). Residues 491–498 (GHVDHGKT) are G1. A GTP-binding site is contributed by 491–498 (GHVDHGKT). The tract at residues 516 to 520 (GITQH) is G2. Positions 537-540 (DTPG) are G3. GTP-binding positions include 537–541 (DTPGH) and 591–594 (NKID). The interval 591–594 (NKID) is G4. The tract at residues 627–629 (SAK) is G5.

The protein belongs to the TRAFAC class translation factor GTPase superfamily. Classic translation factor GTPase family. IF-2 subfamily.

It is found in the cytoplasm. Functionally, one of the essential components for the initiation of protein synthesis. Protects formylmethionyl-tRNA from spontaneous hydrolysis and promotes its binding to the 30S ribosomal subunits. Also involved in the hydrolysis of GTP during the formation of the 70S ribosomal complex. The chain is Translation initiation factor IF-2 from Oleidesulfovibrio alaskensis (strain ATCC BAA-1058 / DSM 17464 / G20) (Desulfovibrio alaskensis).